A 76-amino-acid chain; its full sequence is Sec-independent protein translocase protein TatA (76 aa).

Residues M1–G21 traverse the membrane as a helical segment. A disordered region spans residues E41–V76. The span at I64–V76 shows a compositional bias: basic and acidic residues.

Belongs to the TatA/E family. As to quaternary structure, the Tat system comprises two distinct complexes: a TatABC complex, containing multiple copies of TatA, TatB and TatC subunits, and a separate TatA complex, containing only TatA subunits. Substrates initially bind to the TatABC complex, which probably triggers association of the separate TatA complex to form the active translocon.

It is found in the cell inner membrane. Its function is as follows. Part of the twin-arginine translocation (Tat) system that transports large folded proteins containing a characteristic twin-arginine motif in their signal peptide across membranes. TatA could form the protein-conducting channel of the Tat system. The sequence is that of Sec-independent protein translocase protein TatA from Nitrosomonas europaea (strain ATCC 19718 / CIP 103999 / KCTC 2705 / NBRC 14298).